The sequence spans 864 residues: N-alpha-acetyltransferase 16, NatA auxiliary subunit (864 aa).

TPR repeat units lie at residues Gly-46–Ser-79, His-80–Asn-113, Arg-148–Lys-184, Leu-224–Asn-257, Leu-374–Leu-407, Glu-409–Asp-441, and Met-485–Ile-518. A disordered region spans residues Gln-603 to Leu-638. The span at Ala-606–Gln-621 shows a compositional bias: basic and acidic residues.

In terms of assembly, component of the N-terminal acetyltransferase A (NatA) complex composed of NAA10 and NAA16.

Auxillary subunit of the N-terminal acetyltransferase A (NatA) complex which displays alpha (N-terminal) acetyltransferase activity. In Homo sapiens (Human), this protein is N-alpha-acetyltransferase 16, NatA auxiliary subunit (NAA16).